The chain runs to 76 residues: Putative snRNP Sm-like protein (76 aa).

The 73-residue stretch at 4–76 (RPLDVIHKSL…VLAISPTEEG (73 aa)) folds into the Sm domain.

It belongs to the snRNP Sm proteins family.

The chain is Putative snRNP Sm-like protein from Pyrococcus furiosus (strain ATCC 43587 / DSM 3638 / JCM 8422 / Vc1).